The chain runs to 215 residues: Probable transaldolase (215 aa).

Catalysis depends on lysine 83, which acts as the Schiff-base intermediate with substrate.

This sequence belongs to the transaldolase family. Type 3B subfamily.

The protein resides in the cytoplasm. It catalyses the reaction D-sedoheptulose 7-phosphate + D-glyceraldehyde 3-phosphate = D-erythrose 4-phosphate + beta-D-fructose 6-phosphate. The protein operates within carbohydrate degradation; pentose phosphate pathway; D-glyceraldehyde 3-phosphate and beta-D-fructose 6-phosphate from D-ribose 5-phosphate and D-xylulose 5-phosphate (non-oxidative stage): step 2/3. Transaldolase is important for the balance of metabolites in the pentose-phosphate pathway. This is Probable transaldolase from Streptococcus agalactiae serotype III (strain NEM316).